We begin with the raw amino-acid sequence, 143 residues long: Hemoglobin subunit alpha (143 aa).

The region spanning 2 to 143 is the Globin domain; sequence SLTARDKSVV…LSAALADKYR (142 aa). Residue His-60 participates in O2 binding. His-89 is a binding site for heme b.

The protein belongs to the globin family. As to quaternary structure, heterotetramer of two alpha chains and two beta chains. In terms of tissue distribution, red blood cells.

Functionally, involved in oxygen transport from gills to the various peripheral tissues. This chain is Hemoglobin subunit alpha (hba), found in Salmo salar (Atlantic salmon).